A 578-amino-acid polypeptide reads, in one-letter code: DNA mismatch repair protein MutL (578 aa).

This sequence belongs to the DNA mismatch repair MutL/HexB family.

This protein is involved in the repair of mismatches in DNA. It is required for dam-dependent methyl-directed DNA mismatch repair. May act as a 'molecular matchmaker', a protein that promotes the formation of a stable complex between two or more DNA-binding proteins in an ATP-dependent manner without itself being part of a final effector complex. The sequence is that of DNA mismatch repair protein MutL from Carboxydothermus hydrogenoformans (strain ATCC BAA-161 / DSM 6008 / Z-2901).